Here is a 250-residue protein sequence, read N- to C-terminus: MPKTINNYNRFLPVVHFSQTELEESLCNAVIHNDKKAAEIAIFKLNISDNFTSDLRTNKSYIDDTHNIFIGDSLPLVAVKNNNLDMLKMLLSCGFEPNTPAAANCYTPLWYVTYKGYTNSVRKLLEYPINNINETFGKETPLKSALIHKHTEIAKLLIDKINPDKFLFNGVENIALLAHDQFMFIINEISTDKKISLFKLCSKNITEHQDFILFGKGEAEINNMHINNTYMLDYLDNNHDDSTTIIGSID.

ANK repeat units lie at residues 70–99 (IGDS…EPNT), 104–134 (NCYT…NINE), and 137–166 (GKET…PDKF).

This Rickettsia bellii (strain RML369-C) protein is Putative ankyrin repeat protein RBE_0623.